A 293-amino-acid chain; its full sequence is Probable 2-(5''-triphosphoribosyl)-3'-dephosphocoenzyme-A synthase (293 aa).

It belongs to the CitG/MdcB family.

The catalysed reaction is 3'-dephospho-CoA + ATP = 2'-(5''-triphospho-alpha-D-ribosyl)-3'-dephospho-CoA + adenine. In terms of biological role, involved in the formation of 2-(5''-phosphoribosyl)-3'-dephosphocoenzyme-A, the prosthetic group of the acyl-carrier protein of the malonate decarboxylase. The sequence is that of Probable 2-(5''-triphosphoribosyl)-3'-dephosphocoenzyme-A synthase from Pseudomonas aeruginosa (strain ATCC 15692 / DSM 22644 / CIP 104116 / JCM 14847 / LMG 12228 / 1C / PRS 101 / PAO1).